Here is a 328-residue protein sequence, read N- to C-terminus: GTP 3',8-cyclase (328 aa).

One can recognise a Radical SAM core domain in the interval 1–229; sequence MNQVDYLRIS…ESQVRGAGPA (229 aa). Arg8 contributes to the GTP binding site. [4Fe-4S] cluster contacts are provided by Cys15 and Cys19. Position 21 (Tyr21) interacts with S-adenosyl-L-methionine. A [4Fe-4S] cluster-binding site is contributed by Cys22. Arg60 contacts GTP. Gly64 lines the S-adenosyl-L-methionine pocket. Thr91 serves as a coordination point for GTP. Residue Ser115 participates in S-adenosyl-L-methionine binding. Lys155 is a binding site for GTP. Met189 is an S-adenosyl-L-methionine binding site. Cys252 and Cys255 together coordinate [4Fe-4S] cluster. 257-259 provides a ligand contact to GTP; that stretch reads RMR. [4Fe-4S] cluster is bound at residue Cys269.

It belongs to the radical SAM superfamily. MoaA family. In terms of assembly, monomer and homodimer. [4Fe-4S] cluster is required as a cofactor.

It catalyses the reaction GTP + AH2 + S-adenosyl-L-methionine = (8S)-3',8-cyclo-7,8-dihydroguanosine 5'-triphosphate + 5'-deoxyadenosine + L-methionine + A + H(+). It participates in cofactor biosynthesis; molybdopterin biosynthesis. In terms of biological role, catalyzes the cyclization of GTP to (8S)-3',8-cyclo-7,8-dihydroguanosine 5'-triphosphate. The polypeptide is GTP 3',8-cyclase (Nostoc punctiforme (strain ATCC 29133 / PCC 73102)).